Here is a 770-residue protein sequence, read N- to C-terminus: Capsid protein (770 aa).

Disordered stretches follow at residues 645–682 (QRMQ…QKES) and 697–717 (WEDS…TQTV). Positions 646-656 (RMQQQPTTTDI) are enriched in polar residues. The span at 666 to 681 (RDTEVYHSSQEGEQKE) shows a compositional bias: basic and acidic residues. Low complexity predominate over residues 703-717 (EESGSQSSEEETQTV).

It belongs to the anelloviridae capsid protein family.

It localises to the virion. In terms of biological role, self-assembles to form an icosahedral capsid with a T=1 symmetry, about 30 nm in diameter, and consisting of 60 capsid proteins. The capsid encapsulates the genomic DNA. Capsid protein is involved in attachment and entry into the host cell. The protein is Capsid protein of Homo sapiens (Human).